A 254-amino-acid polypeptide reads, in one-letter code: Imidazole glycerol phosphate synthase subunit HisF (254 aa).

Residues Asp-11 and Asp-130 contribute to the active site.

Belongs to the HisA/HisF family. In terms of assembly, heterodimer of HisH and HisF.

It is found in the cytoplasm. It catalyses the reaction 5-[(5-phospho-1-deoxy-D-ribulos-1-ylimino)methylamino]-1-(5-phospho-beta-D-ribosyl)imidazole-4-carboxamide + L-glutamine = D-erythro-1-(imidazol-4-yl)glycerol 3-phosphate + 5-amino-1-(5-phospho-beta-D-ribosyl)imidazole-4-carboxamide + L-glutamate + H(+). It functions in the pathway amino-acid biosynthesis; L-histidine biosynthesis; L-histidine from 5-phospho-alpha-D-ribose 1-diphosphate: step 5/9. IGPS catalyzes the conversion of PRFAR and glutamine to IGP, AICAR and glutamate. The HisF subunit catalyzes the cyclization activity that produces IGP and AICAR from PRFAR using the ammonia provided by the HisH subunit. The chain is Imidazole glycerol phosphate synthase subunit HisF from Chromobacterium violaceum (strain ATCC 12472 / DSM 30191 / JCM 1249 / CCUG 213 / NBRC 12614 / NCIMB 9131 / NCTC 9757 / MK).